The following is a 219-amino-acid chain: Lipid transferase CIDEB (219 aa).

Residue Thr18 is modified to Phosphothreonine. Residues Pro34 to Pro110 form the CIDE-N domain.

It belongs to the CIDE family. As to quaternary structure, interacts with DFFA. Interacts with DFFB; inhibited by DFFB. Interacts with APOB. Interacts with PREB/SEC12; facilitating loading of SCAP-SREBP into COPII vesicles. Highly enriched in the liver.

The protein resides in the lipid droplet. It localises to the endoplasmic reticulum membrane. The protein localises to the golgi apparatus. It is found in the cytoplasmic vesicle. Its subcellular location is the COPI-coated vesicle. Lipid transferase specifically expressed in hepatocytes, which promotes unilocular lipid droplet formation by mediating lipid droplet fusion. Lipid droplet fusion promotes their enlargement, restricting lipolysis and favoring lipid storage. Localizes on the lipid droplet surface, at focal contact sites between lipid droplets, and mediates atypical lipid droplet fusion by promoting directional net neutral lipid transfer from the smaller to larger lipid droplets. The transfer direction may be driven by the internal pressure difference between the contacting lipid droplet pair. Promotes lipid exchange and lipid droplet fusion in both small and large lipid droplet-containing hepatocytes. In addition to its role in lipid droplet fusion, also involved in cytoplasmic vesicle biogenesis and transport. Required for very-low-density lipoprotein (VLDL) lipidation and maturation. Probably involved in the biogenesis of VLDL transport vesicles by forming a COPII vesicle coat and facilitating the formation of endoplasmic reticulum-derived large vesicles. Also involved in sterol-regulated export of the SCAP-SREBP complex, composed of SCAP, SREBF1/SREBP1 and SREBF2/SREBP2, by promoting loading of SCAP-SREBP into COPII vesicles. May also activate apoptosis. The chain is Lipid transferase CIDEB from Mus musculus (Mouse).